Here is a 231-residue protein sequence, read N- to C-terminus: Orotidine 5'-phosphate decarboxylase (231 aa).

Substrate is bound by residues Asp11, Lys33, 60–69 (DLKFHDIPNT), Thr119, Arg180, Gln189, Gly209, and Arg210. Catalysis depends on Lys62, which acts as the Proton donor.

The protein belongs to the OMP decarboxylase family. Type 1 subfamily. Homodimer.

The catalysed reaction is orotidine 5'-phosphate + H(+) = UMP + CO2. The protein operates within pyrimidine metabolism; UMP biosynthesis via de novo pathway; UMP from orotate: step 2/2. Its function is as follows. Catalyzes the decarboxylation of orotidine 5'-monophosphate (OMP) to uridine 5'-monophosphate (UMP). The chain is Orotidine 5'-phosphate decarboxylase from Idiomarina loihiensis (strain ATCC BAA-735 / DSM 15497 / L2-TR).